Consider the following 762-residue polypeptide: 5-methyltetrahydropteroyltriglutamate--homocysteine methyltransferase (762 aa).

5-methyltetrahydropteroyltri-L-glutamate contacts are provided by residues 17–20 (REWK) and K111. L-homocysteine is bound by residues 435 to 437 (IGS) and E488. Residues 435 to 437 (IGS) and E488 each bind L-methionine. 5-methyltetrahydropteroyltri-L-glutamate-binding positions include 519 to 520 (RC) and W565. D603 provides a ligand contact to L-homocysteine. L-methionine is bound at residue D603. Residue E609 coordinates 5-methyltetrahydropteroyltri-L-glutamate. The Zn(2+) site is built by H645, C647, and E669. The Proton donor role is filled by H698. C730 lines the Zn(2+) pocket.

The protein belongs to the vitamin-B12 independent methionine synthase family. Requires Zn(2+) as cofactor.

It carries out the reaction 5-methyltetrahydropteroyltri-L-glutamate + L-homocysteine = tetrahydropteroyltri-L-glutamate + L-methionine. It participates in amino-acid biosynthesis; L-methionine biosynthesis via de novo pathway; L-methionine from L-homocysteine (MetE route): step 1/1. Its function is as follows. Catalyzes the transfer of a methyl group from 5-methyltetrahydrofolate to homocysteine resulting in methionine formation. In Bacillus cereus (strain ATCC 14579 / DSM 31 / CCUG 7414 / JCM 2152 / NBRC 15305 / NCIMB 9373 / NCTC 2599 / NRRL B-3711), this protein is 5-methyltetrahydropteroyltriglutamate--homocysteine methyltransferase.